The following is a 356-amino-acid chain: Neutral protease 2 homolog UREG_03761 (356 aa).

The signal sequence occupies residues 1 to 19 (MRFSSSFLSVLALASQALA). Residues 20–181 (FPLNDLPTTD…ALPEATLDKR (162 aa)) constitute a propeptide that is removed on maturation. 2 cysteine pairs are disulfide-bonded: C189–C259 and C266–C284. H308 contributes to the Zn(2+) binding site. E309 is a catalytic residue. Zn(2+) contacts are provided by H312 and D323.

Belongs to the peptidase M35 family. Requires Zn(2+) as cofactor.

It is found in the secreted. It carries out the reaction Preferential cleavage of bonds with hydrophobic residues in P1'. Also 3-Asn-|-Gln-4 and 8-Gly-|-Ser-9 bonds in insulin B chain.. Its function is as follows. Secreted metalloproteinase that allows assimilation of proteinaceous substrates. Shows high activities on basic nuclear substrates such as histone and protamine. The sequence is that of Neutral protease 2 homolog UREG_03761 from Uncinocarpus reesii (strain UAMH 1704).